Reading from the N-terminus, the 400-residue chain is Cell division protein FtsZ 2 (400 aa).

The span at 1–16 (MQDIVREAMERDEAER) shows a compositional bias: basic and acidic residues. The segment at 1-30 (MQDIVREAMERDEAERQTQSSLEDSDDQFG) is disordered. GTP-binding positions include 41–45 (GAGNN), 128–130 (GTG), Glu-159, Arg-162, and Asp-205. The tract at residues 338–400 (VLGPSTQKQA…EKNNGLDVIR (63 aa)) is disordered. A compositionally biased stretch (low complexity) spans 352–364 (QSIQSRESQQQHS). The span at 365 to 382 (GSEFDSSERAQTAQSGTW) shows a compositional bias: polar residues. Residues 385-400 (GGRDEVEKNNGLDVIR) are compositionally biased toward basic and acidic residues.

This sequence belongs to the FtsZ family. As to quaternary structure, homodimer. Polymerizes to form a dynamic ring structure in a strictly GTP-dependent manner. Interacts directly with several other division proteins. Interacts with SepF.

It localises to the cytoplasm. In terms of biological role, essential cell division protein that forms a contractile ring structure (Z ring) at the future cell division site. The regulation of the ring assembly controls the timing and the location of cell division. One of the functions of the FtsZ ring is to recruit other cell division proteins to the septum to produce a new cell wall between the dividing cells. Binds GTP and shows GTPase activity. Required for division ring constriction. This is Cell division protein FtsZ 2 from Haloferax volcanii (strain ATCC 29605 / DSM 3757 / JCM 8879 / NBRC 14742 / NCIMB 2012 / VKM B-1768 / DS2) (Halobacterium volcanii).